Reading from the N-terminus, the 605-residue chain is Formin-binding protein 1-like (605 aa).

The F-BAR domain maps to 1 to 263; the sequence is MSWGTELWDQ…AAKSVDERRD (263 aa). The stretch at 66–258 forms a coiled coil; the sequence is FTSCVAFFNI…EGMILAAKSV (193 aa). The segment at 245–535 is interaction with CDC42; the sequence is SKCLEGMILA…EFDDEFEDDD (291 aa). Serine 295 carries the phosphoserine modification. A coiled-coil region spans residues 392–484; sequence LEDFSHLPPE…VEGKTGGRGD (93 aa). Positions 397–474 constitute an REM-1 domain; the sequence is HLPPEQRRKK…IHKNEAWLSE (78 aa). The segment covering 476 to 490 has biased composition (basic and acidic residues); it reads EGKTGGRGDRRHSSD. The tract at residues 476-539 is disordered; the sequence is EGKTGGRGDR…EFEDDDPLPA (64 aa). Serine 488, serine 501, and serine 505 each carry phosphoserine. The interaction with DNM1 stretch occupies residues 522–605; that stretch reads GHHNEFDDEF…VTLEKNSKGS (84 aa). The segment covering 527 to 536 has biased composition (acidic residues); that stretch reads FDDEFEDDDP. An SH3 domain is found at 538–599; sequence PAIGHCKAIY…PTSYIDVTLE (62 aa). Positions 541–597 are interaction with DNM2 and WASL; the sequence is GHCKAIYPFDGHNEGTLAMKEGEVLYIIEEDKGDGWTRARRQNGEEGYVPTSYIDVT. An interaction with DAAM1, DIAPH1 and DIAPH2 region spans residues 541-605; the sequence is GHCKAIYPFD…VTLEKNSKGS (65 aa).

It belongs to the FNBP1 family. In terms of assembly, homodimerizes, the dimers can polymerize end-to-end to form filamentous structures. Interacts with GTP-bound CDC42. Interacts with DAAM1, DIAPH1, DIAPH2, DNM1, DNM2 and WASL/N-WASP. Interacts with ATG3. Interacts (via SH3 domain) with ABI1, WASF2, CDC42 and WIPF1.

The protein localises to the cytoplasm. It is found in the cytoskeleton. The protein resides in the cell cortex. Its subcellular location is the cytoplasmic vesicle. It localises to the cell membrane. Its function is as follows. Required to coordinate membrane tubulation with reorganization of the actin cytoskeleton during endocytosis. May bind to lipids such as phosphatidylinositol 4,5-bisphosphate and phosphatidylserine and promote membrane invagination and the formation of tubules. Also promotes CDC42-induced actin polymerization by activating the WASL/N-WASP-WASPIP/WIP complex, the predominant form of WASL/N-WASP in cells. Actin polymerization may promote the fission of membrane tubules to form endocytic vesicles. Essential for autophagy of intracellular bacterial pathogens. The sequence is that of Formin-binding protein 1-like (FNBP1L) from Homo sapiens (Human).